The chain runs to 85 residues: MYSKDVEIIASNGLHTRPAAQFVKEAKAFSSEITVTSGGKSASAKSLFKLQTLALTQGTILTISADGEDEQQAVEHLVALIPTLE.

The region spanning 1 to 85 (MYSKDVEIIA…HLVALIPTLE (85 aa)) is the HPr domain. Histidine 15 acts as the Pros-phosphohistidine intermediate in catalysis.

It belongs to the HPr family.

The protein localises to the cytoplasm. Functionally, general (non sugar-specific) component of the phosphoenolpyruvate-dependent sugar phosphotransferase system (sugar PTS). This major carbohydrate active-transport system catalyzes the phosphorylation of incoming sugar substrates concomitantly with their translocation across the cell membrane. The phosphoryl group from phosphoenolpyruvate (PEP) is transferred to the phosphoryl carrier protein HPr by enzyme I. Phospho-HPr then transfers it to the PTS EIIA domain. This Haemophilus influenzae (strain ATCC 51907 / DSM 11121 / KW20 / Rd) protein is Phosphocarrier protein HPr (ptsH).